The primary structure comprises 356 residues: Cell division control protein 10 (356 aa).

The 251-residue stretch at 36–286 (KGFELNVLVV…NNYRKKIFEI (251 aa)) folds into the Septin-type G domain. The tract at residues 46–53 (GRRGLGTS) is G1 motif. Residues 46 to 53 (GRRGLGTS) and Thr70 each bind GTP. Positions 93-96 (TYHE) are G3 motif. The G4 motif stretch occupies residues 163–166 (PKAD). GTP-binding positions include 164–172 (KADMYTPDE) and Arg235.

This sequence belongs to the TRAFAC class TrmE-Era-EngA-EngB-Septin-like GTPase superfamily. Septin GTPase family. As to quaternary structure, component of the septin complex.

Functionally, septins are GTPases involved in cytokinesis. The septins localize to the site of cleavage and act as a structural scaffold that recruits different components involved in diverse processes at specific stages during the cell cycle. Septins are also involved in cell morphogenesis, chitin deposition, cell cycle regulation, cell compartmentalization and spore wall formation. The protein is Cell division control protein 10 (CDC10) of Encephalitozoon cuniculi (strain GB-M1) (Microsporidian parasite).